Consider the following 93-residue polypeptide: Small ribosomal subunit protein uS19 (93 aa).

Belongs to the universal ribosomal protein uS19 family.

Its function is as follows. Protein S19 forms a complex with S13 that binds strongly to the 16S ribosomal RNA. In Mycobacterium tuberculosis (strain ATCC 25177 / H37Ra), this protein is Small ribosomal subunit protein uS19.